The following is a 762-amino-acid chain: Probable inorganic carbon transporter subunit DabA (762 aa).

4 residues coordinate Zn(2+): Cys-279, Asp-281, His-461, and Cys-476.

Belongs to the inorganic carbon transporter (TC 9.A.2) DabA family. In terms of assembly, forms a complex with DabB. Zn(2+) is required as a cofactor.

The protein resides in the cell inner membrane. Its function is as follows. Part of an energy-coupled inorganic carbon pump. The sequence is that of Probable inorganic carbon transporter subunit DabA from Legionella pneumophila (strain Lens).